A 225-amino-acid chain; its full sequence is LysM and putative peptidoglycan-binding domain-containing protein 1 (225 aa).

Ser-23 and Ser-33 each carry phosphoserine. The LysM domain maps to 40–84 (LEHQLAPGDTLAGLALKYGVTMEQIKRANRLYTNDSIFLKKTLHI). Positions 97 to 153 (LDSEEEKDGEEAVQPSKDEVRPHSAERKKRERGLGHANGEPLPTAGQEPARHDLSAS) are disordered. Acidic residues predominate over residues 98–107 (DSEEEKDGEE). A Phosphoserine modification is found at Ser-99. Residues 112–121 (SKDEVRPHSA) show a composition bias toward basic and acidic residues. Phosphoserine occurs at positions 164, 179, 192, and 210. Residues 170 to 225 (AAQKLKKGESGIPGEDSSLHLSSPRMQQRAVLGPVPLTQTSRTRTLRDQEDEIFKL) form a disordered region. Residues 214–225 (TLRDQEDEIFKL) are compositionally biased toward basic and acidic residues.

This is LysM and putative peptidoglycan-binding domain-containing protein 1 (LYSMD1) from Bos taurus (Bovine).